Here is a 1754-residue protein sequence, read N- to C-terminus: Intraflagellar transport protein 172 homolog (1754 aa).

WD repeat units follow at residues 14 to 53 (EQIQ…RDKF), 64 to 103 (KNSY…NDKK), 110 to 149 (PQAS…QSLY), 151 to 190 (GDSI…EPLG), 194 to 232 (QHPV…RTFD), 283 to 322 (ACLY…TVWQ), and 519 to 557 (TLLS…EHVT). TPR repeat units follow at residues 623 to 656 (KAMW…SKAY), 690 to 723 (GSDL…DEAV), 748 to 781 (SEQQ…ARAA), 807 to 840 (SELY…ARAL), 852 to 885 (TALE…QKAL), 1041 to 1074 (RGKL…EDGY), 1140 to 1166 (DEVH…FLKA), 1167 to 1199 (NKPR…AVGE), 1211 to 1250 (TSNY…AEEH), 1282 to 1315 (SRSY…NAED), and 1698 to 1733 (FPVR…SPGS).

Belongs to the IFT172 family.

The protein localises to the cell projection. It is found in the cilium. Its function is as follows. Required for the maintenance and formation of cilia. This Drosophila melanogaster (Fruit fly) protein is Intraflagellar transport protein 172 homolog.